The chain runs to 621 residues: Pentatricopeptide repeat-containing protein At3g48250, chloroplastic (621 aa).

Residues 1-67 constitute a chloroplast transit peptide; sequence MYRSMAILSS…SKPDSMLQLV (67 aa). PPR repeat units lie at residues 122-156, 157-194, 262-296, 297-331, 332-368, 369-403, 404-438, 439-473, 474-509, and 510-544; these read STPLYSIMLRILVQQRSMKRFWMTLREMKQGGFYL, DEDTYKTIYGELSKEKSKADAVAVAHFYERMLKENAMS, STVTYNAALRVLARPNSVAEFWSVVDEMKTAGYDM, DLDTYIKVSRQFQKSRMMAETVKLYEYMMDGPFKP, SIQDCSLLLRYLSGSPNPDLDLVFRVSRKYESTGKSL, SKAVYDGIHRSLTSVGRFDEAEEITKAMRNAGYEP, DNITYSQLVFGLCKAKRLEEARGVLDQMEAQGCFP, DIKTWTILIQGHCKNNELDKALACFANMLEKGFDI, DSNLLDVLIDGFVIHNKFEGASIFLMEMVKNANVKP, and WQSTYKLLIDKLLKIKKSEEALDLLQMMKKQNYPA.

It belongs to the PPR family. P subfamily.

It localises to the plastid. Its subcellular location is the chloroplast. The sequence is that of Pentatricopeptide repeat-containing protein At3g48250, chloroplastic from Arabidopsis thaliana (Mouse-ear cress).